We begin with the raw amino-acid sequence, 260 residues long: Acidic leucine-rich nuclear phosphoprotein 32 family member E (260 aa).

Met1 carries the post-translational modification N-acetylmethionine. LRR repeat units lie at residues 18–38, 43–64, 65–87, and 89–110; these read EVTE…EGLN, ELEF…PSLN, KLRK…AEKC, and NLTY…EALQ. Residue Lys68 forms a Glycyl lysine isopeptide (Lys-Gly) (interchain with G-Cter in SUMO2) linkage. The LRRCT domain occupies 123–161; sequence CEITNLEDYRESIFELLQQITYLDGFDQEDNEAPDSEEE. Composition is skewed to acidic residues over residues 149 to 208 and 218 to 240; these read DQED…EEEV and IQDE…EEEE. The tract at residues 149-260 is disordered; the sequence is DQEDNEAPDS…AEDDGEEDDD (112 aa). Residues 207 to 260 form a ZID domain region; sequence EVGLSYLMKDEIQDEEDDDDYVDEGEEEEEEEEEGLRGEKRKRDAEDDGEEDDD. Residues 241 to 251 are compositionally biased toward basic and acidic residues; sequence GLRGEKRKRDA.

This sequence belongs to the ANP32 family. Component of a SWR1-like complex, composed of EP400, KAT5/TIP60, TRRAP, BRD8, RUVBL1, RUVBL2, ING3 and ANP32E; the complex does not contain SRCAP. Interacts with H2A.Z/H2AZ1. Interacts with the importin alpha KPNA1 and KPNA2. Post-translationally, phosphorylated. The phosphorylation is nuclear localization signal (NLS)-dependent. In terms of tissue distribution, expressed at highest levels in cerebellum and spleen. In the cerebellum, expressed mainly in granule cells and, to a lesser extent, in Purkinje cells.

The protein localises to the cytoplasm. It localises to the nucleus. In terms of biological role, histone chaperone that specifically mediates the genome-wide removal of histone H2A.Z/H2AZ1 from the nucleosome: removes H2A.Z/H2AZ1 from its normal sites of deposition, especially from enhancer and insulator regions. Not involved in deposition of H2A.Z/H2AZ1 in the nucleosome. May stabilize the evicted H2A.Z/H2AZ1-H2B dimer, thus shifting the equilibrium towards dissociation and the off-chromatin state. Inhibits activity of protein phosphatase 2A (PP2A). Does not inhibit protein phosphatase 1. May play a role in cerebellar development and synaptogenesis. The protein is Acidic leucine-rich nuclear phosphoprotein 32 family member E (Anp32e) of Mus musculus (Mouse).